A 594-amino-acid chain; its full sequence is Proteasome-associated ATPase (594 aa).

Residues 20–98 (DDLAAQVTYL…KEEIDRLAQP (79 aa)) are a coiled coil. 282–287 (GCGKTL) contacts ATP. Residues 593–594 (YL) form a docks into pockets in the proteasome alpha-ring region.

The protein belongs to the AAA ATPase family. In terms of assembly, homohexamer. Assembles into a hexameric ring structure that caps the 20S proteasome core. Strongly interacts with the prokaryotic ubiquitin-like protein Pup through a hydrophobic interface; the interacting region of ARC lies in its N-terminal coiled-coil domain. There is one Pup binding site per ARC hexamer ring. Upon ATP-binding, the C-terminus of ARC interacts with the alpha-rings of the proteasome core, possibly by binding to the intersubunit pockets.

The protein operates within protein degradation; proteasomal Pup-dependent pathway. Its function is as follows. ATPase which is responsible for recognizing, binding, unfolding and translocation of pupylated proteins into the bacterial 20S proteasome core particle. May be essential for opening the gate of the 20S proteasome via an interaction with its C-terminus, thereby allowing substrate entry and access to the site of proteolysis. Thus, the C-termini of the proteasomal ATPase may function like a 'key in a lock' to induce gate opening and therefore regulate proteolysis. This chain is Proteasome-associated ATPase, found in Catenulispora acidiphila (strain DSM 44928 / JCM 14897 / NBRC 102108 / NRRL B-24433 / ID139908).